A 414-amino-acid chain; its full sequence is Putative competence-damage inducible protein (414 aa).

The protein belongs to the CinA family.

This Clostridium novyi (strain NT) protein is Putative competence-damage inducible protein.